The primary structure comprises 217 residues: Protein GrpE (217 aa).

This sequence belongs to the GrpE family. Homodimer.

It localises to the cytoplasm. Functionally, participates actively in the response to hyperosmotic and heat shock by preventing the aggregation of stress-denatured proteins, in association with DnaK and GrpE. It is the nucleotide exchange factor for DnaK and may function as a thermosensor. Unfolded proteins bind initially to DnaJ; upon interaction with the DnaJ-bound protein, DnaK hydrolyzes its bound ATP, resulting in the formation of a stable complex. GrpE releases ADP from DnaK; ATP binding to DnaK triggers the release of the substrate protein, thus completing the reaction cycle. Several rounds of ATP-dependent interactions between DnaJ, DnaK and GrpE are required for fully efficient folding. The sequence is that of Protein GrpE from Mycoplasma genitalium (strain ATCC 33530 / DSM 19775 / NCTC 10195 / G37) (Mycoplasmoides genitalium).